Consider the following 493-residue polypeptide: Polyamine aminopropyltransferase 2 (493 aa).

7 helical membrane passes run 9-29, 32-52, 68-88, 101-121, 137-157, 161-181, and 188-208; these read LCIF…ATLA, LLGN…LSMG, LAFV…VPIA, VIYG…PLAV, VLEK…YLFL, GLPL…FLLV, and KFLK…AVGH. Positions 187 to 448 are spermidine synthase; the sequence is KKFLKFLAIF…PLNFENFELK (262 aa). A PABS domain is found at 202-437; sequence ATYAVGHKRI…GEWGMVIGSK (236 aa). Gln-233 serves as a coordination point for S-methyl-5'-thioadenosine. Positions 263 and 287 each coordinate spermidine. Residues Asp-306 and 340–341 contribute to the S-methyl-5'-thioadenosine site; that span reads DA. The active-site Proton acceptor is the Asp-358.

The protein belongs to the spermidine/spermine synthase family. Homodimer or homotetramer.

It is found in the cell membrane. The enzyme catalyses S-adenosyl 3-(methylsulfanyl)propylamine + putrescine = S-methyl-5'-thioadenosine + spermidine + H(+). The protein operates within amine and polyamine biosynthesis; spermidine biosynthesis; spermidine from putrescine: step 1/1. Catalyzes the irreversible transfer of a propylamine group from the amino donor S-adenosylmethioninamine (decarboxy-AdoMet) to putrescine (1,4-diaminobutane) to yield spermidine. The chain is Polyamine aminopropyltransferase 2 from Aquifex aeolicus (strain VF5).